We begin with the raw amino-acid sequence, 210 residues long: Casparian strip membrane protein 1 (210 aa).

Residues 1–25 (MEKSEATTIDVAETSRESKGKAPLL) are disordered. Residues 1-48 (MEKSEATTIDVAETSRESKGKAPLLRDPPAWVPAAVERQRAAPAYKRG) are Cytoplasmic-facing. The chain crosses the membrane as a helical span at residues 49 to 69 (VAIFDLILRISAATAALAATI). Over 70–98 (TMGTTEQTLPFFTQFFQFQASYDDLPTFT) the chain is Extracellular. The helical transmembrane segment at 99-119 (FFVIAMSIVTGYLVLSVPFSI) threads the bilayer. The Cytoplasmic portion of the chain corresponds to 120–138 (VCIARPVAAAPRLLLILCD). Residues 139 to 159 (TLAVTLNTSAAGASAAIVYLA) traverse the membrane as a helical segment. At 160–183 (HNGNSDANWLAICQQFNDFCQRTS) the chain is on the extracellular side. The chain crosses the membrane as a helical span at residues 184 to 204 (GAVVASFVAVVLLIFLVVLSA). At 205–210 (SALKKH) the chain is on the cytoplasmic side.

Belongs to the Casparian strip membrane proteins (CASP) family. In terms of assembly, homodimer and heterodimers.

Its subcellular location is the cell membrane. Regulates membrane-cell wall junctions and localized cell wall deposition. Required for establishment of the Casparian strip membrane domain (CSD) and the subsequent formation of Casparian strips, a cell wall modification of the root endodermis that determines an apoplastic barrier between the intraorganismal apoplasm and the extraorganismal apoplasm and prevents lateral diffusion. This Erythranthe guttata (Yellow monkey flower) protein is Casparian strip membrane protein 1.